The chain runs to 573 residues: Membrane protein insertase YidC (573 aa).

A helical transmembrane segment spans residues 6–26 (VFLIFAWLMVAALLWMEWGKD). Residues 63 to 82 (PQAGSPAAVPATSTTTATPA) form a disordered region. 5 helical membrane-spanning segments follow: residues 355-375 (FSIM…LHSF), 379-399 (WGWA…PLSA), 446-466 (GGCL…WVLV), 488-508 (PYFI…KLTP), and 524-544 (PLVF…YWVV).

The protein belongs to the OXA1/ALB3/YidC family. Type 1 subfamily. As to quaternary structure, interacts with the Sec translocase complex via SecD. Specifically interacts with transmembrane segments of nascent integral membrane proteins during membrane integration.

Its subcellular location is the cell inner membrane. Functionally, required for the insertion and/or proper folding and/or complex formation of integral membrane proteins into the membrane. Involved in integration of membrane proteins that insert both dependently and independently of the Sec translocase complex, as well as at least some lipoproteins. Aids folding of multispanning membrane proteins. This is Membrane protein insertase YidC from Xanthomonas campestris pv. campestris (strain 8004).